A 429-amino-acid polypeptide reads, in one-letter code: Inner membrane transport protein RhmT (429 aa).

Topologically, residues Met-1–Arg-16 are cytoplasmic. A helical membrane pass occupies residues Leu-17–Phe-37. Residues Ala-38 to Ala-54 are Periplasmic-facing. Residues Leu-55–Met-75 form a helical membrane-spanning segment. The Cytoplasmic segment spans residues Arg-76–Arg-81. Residues Thr-82–Asp-102 traverse the membrane as a helical segment. Topologically, residues Thr-103–Gly-143 are periplasmic. Residues Leu-144–Leu-164 form a helical membrane-spanning segment. The Cytoplasmic segment spans residues Glu-165–Gly-174. The chain crosses the membrane as a helical span at residues Trp-175–Phe-195. Over Trp-196–Gln-242 the chain is Periplasmic. The chain crosses the membrane as a helical span at residues Leu-243 to Thr-263. The Cytoplasmic segment spans residues Gln-264–Gly-274. The helical transmembrane segment at Phe-275 to Ile-295 threads the bilayer. Residues Pro-296–Gly-324 are Periplasmic-facing. The helical transmembrane segment at Leu-325–Val-345 threads the bilayer. Over Gln-346–Ala-361 the chain is Cytoplasmic. Residues Leu-362–Ile-382 form a helical membrane-spanning segment. The Periplasmic portion of the chain corresponds to Leu-383–Asp-394. Residues Ala-395 to Leu-415 traverse the membrane as a helical segment. The Cytoplasmic portion of the chain corresponds to Arg-416 to His-429.

This sequence belongs to the major facilitator superfamily. Phthalate permease family.

Its subcellular location is the cell inner membrane. This chain is Inner membrane transport protein RhmT (rhmT), found in Escherichia coli (strain K12).